Here is a 473-residue protein sequence, read N- to C-terminus: Serine palmitoyltransferase 1 (473 aa).

Topologically, residues 1-15 (MATVAEQWVLVEMVQ) are lumenal. The interval 1 to 66 (MATVAEQWVL…KEELIEEWQP (66 aa)) is interaction with SPTLC2. A helical transmembrane segment spans residues 16-36 (ALYEAPAYHLILEGILILWII). Residues 37-473 (RLLFSKTYKL…ISEVAQTVLL (437 aa)) are Cytoplasmic-facing. Y164 is modified (phosphotyrosine; by ABL).

It belongs to the class-II pyridoxal-phosphate-dependent aminotransferase family. As to quaternary structure, component of the serine palmitoyltransferase (SPT) complex, which is also composed of SPTLC2 or SPTLC3 and SPTSSA or SPTSSB. The heterodimer with SPTLC2 or SPTLC3 forms the catalytic core of the enzyme, while SPTSSA or SPTSSB subunits determine substrate specificity. SPT also interacts with ORMDL proteins, especially ORMDL3, which negatively regulate SPT activity in the presence of ceramides. Forms dimers of heterodimers with SPTLC2. Interacts with RTN4. The cofactor is pyridoxal 5'-phosphate. In terms of processing, phosphorylation at Tyr-164 inhibits activity and promotes cell survival.

It localises to the endoplasmic reticulum membrane. It carries out the reaction L-serine + hexadecanoyl-CoA + H(+) = 3-oxosphinganine + CO2 + CoA. The enzyme catalyses octadecanoyl-CoA + L-serine + H(+) = 3-oxoeicosasphinganine + CO2 + CoA. It catalyses the reaction tetradecanoyl-CoA + L-serine + H(+) = 3-oxohexadecasphinganine + CO2 + CoA. The catalysed reaction is dodecanoyl-CoA + L-serine + H(+) = 3-oxotetradecasphinganine + CO2 + CoA. Its pathway is lipid metabolism; sphingolipid metabolism. Its activity is regulated as follows. SPT complex catalytic activity is negatively regulated by ORMDL proteins, including ORMDL3, in the presence of ceramides. This mechanism allows to maintain ceramide levels at sufficient concentrations for the production of complex sphingolipids, but which prevents the accumulation of ceramides to levels that trigger apoptosis. Its function is as follows. Component of the serine palmitoyltransferase multisubunit enzyme (SPT) that catalyzes the initial and rate-limiting step in sphingolipid biosynthesis by condensing L-serine and activated acyl-CoA (most commonly palmitoyl-CoA) to form long-chain bases. The SPT complex is also composed of SPTLC2 or SPTLC3 and SPTSSA or SPTSSB. Within this complex, the heterodimer with SPTLC2 or SPTLC3 forms the catalytic core. The composition of the serine palmitoyltransferase (SPT) complex determines the substrate preference. The SPTLC1-SPTLC2-SPTSSA complex shows a strong preference for C16-CoA substrate, while the SPTLC1-SPTLC3-SPTSSA isozyme uses both C14-CoA and C16-CoA as substrates, with a slight preference for C14-CoA. The SPTLC1-SPTLC2-SPTSSB complex shows a strong preference for C18-CoA substrate, while the SPTLC1-SPTLC3-SPTSSB isozyme displays an ability to use a broader range of acyl-CoAs, without apparent preference. Required for adipocyte cell viability and metabolic homeostasis. The chain is Serine palmitoyltransferase 1 (SPTLC1) from Bos taurus (Bovine).